The sequence spans 475 residues: ATP synthase subunit beta, chloroplastic (475 aa).

Position 156-163 (156-163) interacts with ATP; the sequence is GGAGVGKT.

The protein belongs to the ATPase alpha/beta chains family. In terms of assembly, F-type ATPases have 2 components, CF(1) - the catalytic core - and CF(0) - the membrane proton channel. CF(1) has five subunits: alpha(3), beta(3), gamma(1), delta(1), epsilon(1). CF(0) has four main subunits: a(1), b(1), b'(1) and c(9-12).

The protein resides in the plastid. It is found in the chloroplast thylakoid membrane. The enzyme catalyses ATP + H2O + 4 H(+)(in) = ADP + phosphate + 5 H(+)(out). In terms of biological role, produces ATP from ADP in the presence of a proton gradient across the membrane. The catalytic sites are hosted primarily by the beta subunits. The sequence is that of ATP synthase subunit beta, chloroplastic from Gracilaria tenuistipitata var. liui (Red alga).